A 455-amino-acid chain; its full sequence is Argininosuccinate lyase (455 aa).

It belongs to the lyase 1 family. Argininosuccinate lyase subfamily.

The protein resides in the cytoplasm. The catalysed reaction is 2-(N(omega)-L-arginino)succinate = fumarate + L-arginine. It functions in the pathway amino-acid biosynthesis; L-arginine biosynthesis; L-arginine from L-ornithine and carbamoyl phosphate: step 3/3. The sequence is that of Argininosuccinate lyase from Roseiflexus sp. (strain RS-1).